The primary structure comprises 1172 residues: Phytochrome B (1172 aa).

Positions 1–16 are enriched in gly residues; sequence MVSGVGGSGGGRGGGR. A disordered region spans residues 1-54; sequence MVSGVGGSGGGRGGGRGGEEEPSSSHTPNNRRGGEQAQSSGTKSLRPRSNTESM. The segment covering 24-54 has biased composition (polar residues); the sequence is SSHTPNNRRGGEQAQSSGTKSLRPRSNTESM. Residues 252 to 433 form the GAF domain; that stretch reads DIKLLCDTVV…AFGLQLNMEL (182 aa). Cysteine 357 serves as a coordination point for phytochromobilin. 2 PAS domains span residues 652-723 and 786-857; these read VARE…LRGD and DYKA…MIVL. Residues 934–1153 enclose the Histidine kinase domain; it reads YICQVIKNPL…LIILELPVPR (220 aa).

The protein belongs to the phytochrome family. In terms of assembly, homodimer. Interacts with ADO1 and PKS4. Stabilized by interactions with PAPP5 and FYPP3 which are enhanced in the phosphorylated Pfr form. Interacts with VOZ1 and VOZ2. Binds, via its photosensory domain, to PTAC12/HMR/PAP5 when photoactivated; this interaction stimulates its localization to photobodies. Interacts with CRY1 specifically when in the dark/far-red (Pr) state, but not when red light-activated (Pfr). Interacts with PIF4 and PIF5 in response to low blue light (LBL). Component of a red light-dependent nuclear complex made of PHL, PHYB and CO. Interacts directly with PHL. Binds to UNE10/PIF8 when red light-activated (Pfr). When light-activated, interacts with PCH1 and PCHL. Associated with DRT111/RSN2/SFPS, SMP2 and SWAP1 in nuclear photobodies upon response to red light (Pfr form). Post-translationally, contains one covalently linked phytochromobilin chromophore. Expressed in fruits, flowers, leaves, stems, seedlings and roots.

It localises to the cytoplasm. Its subcellular location is the nucleus. The protein resides in the nucleoplasm. It is found in the nucleus speckle. Functionally, regulatory photoreceptor which exists in two forms that are reversibly interconvertible by light: the Pr form that absorbs maximally in the red region of the spectrum and the Pfr form that absorbs maximally in the far-red region. Photoconversion of Pr to Pfr induces an array of morphogenetic responses, whereas reconversion of Pfr to Pr cancels the induction of those responses. Pfr controls the expression of a number of nuclear genes including those encoding the small subunit of ribulose-bisphosphate carboxylase, chlorophyll A/B binding protein, protochlorophyllide reductase, rRNA, etc. It also controls the expression of its own gene(s) in a negative feedback fashion. Involved in the flowering time regulation. Involved in light-regulated circadian phase control that triggers stomatal aperture, stomatal conductance, and CO(2) assimilation. Implicated in red light perception, and, to a lower extent, in blue light signaling. Controls thermomorphogenesis in the daytime and regulates temperature responses by associating with the promoters of key target genes in a temperature-dependent manner and subsequently repressing their expression in a PIF4-dependent manner (temperature-responsive transcriptional regulator); this process requires PTAC12/HMR/PAP5 (transcriptional activator). Thermal timer that integrates temperature information over the course of the night. Detabilizes UNE10/PIF8 in red light. The chain is Phytochrome B from Arabidopsis thaliana (Mouse-ear cress).